We begin with the raw amino-acid sequence, 546 residues long: CTP synthase (546 aa).

An amidoligase domain region spans residues methionine 1–leucine 269. Residue serine 16 coordinates CTP. Position 16 (serine 16) interacts with UTP. Residues serine 17–valine 22 and aspartate 74 contribute to the ATP site. Mg(2+) is bound by residues aspartate 74 and glutamate 143. CTP is bound by residues aspartate 150–glutamate 152, lysine 190–glutamine 195, and lysine 226. UTP is bound by residues lysine 190–glutamine 195 and lysine 226. Residues threonine 294–asparagine 546 enclose the Glutamine amidotransferase type-1 domain. Glycine 356 serves as a coordination point for L-glutamine. Catalysis depends on cysteine 383, which acts as the Nucleophile; for glutamine hydrolysis. L-glutamine-binding positions include leucine 384–glutamine 387, glutamate 407, and arginine 474. Catalysis depends on residues histidine 519 and glutamate 521.

This sequence belongs to the CTP synthase family. As to quaternary structure, homotetramer.

The catalysed reaction is UTP + L-glutamine + ATP + H2O = CTP + L-glutamate + ADP + phosphate + 2 H(+). It carries out the reaction L-glutamine + H2O = L-glutamate + NH4(+). It catalyses the reaction UTP + NH4(+) + ATP = CTP + ADP + phosphate + 2 H(+). It functions in the pathway pyrimidine metabolism; CTP biosynthesis via de novo pathway; CTP from UDP: step 2/2. Its activity is regulated as follows. Allosterically activated by GTP, when glutamine is the substrate; GTP has no effect on the reaction when ammonia is the substrate. The allosteric effector GTP functions by stabilizing the protein conformation that binds the tetrahedral intermediate(s) formed during glutamine hydrolysis. Inhibited by the product CTP, via allosteric rather than competitive inhibition. Functionally, catalyzes the ATP-dependent amination of UTP to CTP with either L-glutamine or ammonia as the source of nitrogen. Regulates intracellular CTP levels through interactions with the four ribonucleotide triphosphates. This Francisella tularensis subsp. tularensis (strain FSC 198) protein is CTP synthase.